The following is a 635-amino-acid chain: Beta-mannosyltransferase 2 (635 aa).

Over 1-6 (MRTRLN) the chain is Cytoplasmic. A helical membrane pass occupies residues 7–27 (FLLLCIASVLSVIWIGVLLTW). Topologically, residues 28–635 (NDNNLGGISL…EKKEAEKKGK (608 aa)) are extracellular. Residue Asn484 is glycosylated (N-linked (GlcNAc...) asparagine). Residues 512 to 635 (TRGEAERRRR…EKKEAEKKGK (124 aa)) are a coiled coil. The disordered stretch occupies residues 517 to 635 (ERRRRVAEER…EKKEAEKKGK (119 aa)).

The protein belongs to the BMT family.

The protein localises to the membrane. Its function is as follows. Beta-mannosyltransferase involved in cell wall biosynthesis. Initiates the beta-mannosylation of core N-linked glycans. The polypeptide is Beta-mannosyltransferase 2 (BMT2) (Komagataella phaffii (strain ATCC 76273 / CBS 7435 / CECT 11047 / NRRL Y-11430 / Wegner 21-1) (Yeast)).